The chain runs to 467 residues: Cell division protein FtsP (467 aa).

Residues 1–28 (MRSLTRRDFLKSGILASSLSCIPQSVMA) constitute a signal peptide (tat-type signal).

Belongs to the FtsP family. In terms of processing, predicted to be exported by the Tat system. The position of the signal peptide cleavage has not been experimentally proven.

The protein resides in the periplasm. Its function is as follows. Cell division protein that is required for growth during stress conditions. May be involved in protecting or stabilizing the divisomal assembly under conditions of stress. This Histophilus somni (strain 2336) (Haemophilus somnus) protein is Cell division protein FtsP.